Reading from the N-terminus, the 294-residue chain is Nucleotide-binding protein CLL_A3342 (294 aa).

Residue 8 to 15 (GLSGAGKT) coordinates ATP. A GTP-binding site is contributed by 59–62 (DIRG).

The protein belongs to the RapZ-like family.

In terms of biological role, displays ATPase and GTPase activities. This chain is Nucleotide-binding protein CLL_A3342, found in Clostridium botulinum (strain Eklund 17B / Type B).